The chain runs to 139 residues: Immunogenic miracidial antigen 8I' (139 aa).

The segment at Ile-61–His-139 is disordered. The segment covering Gly-64 to Asp-85 has biased composition (acidic residues). Residues Ser-90–Gln-103 are compositionally biased toward polar residues.

This sequence belongs to the immunogenic miracidial antigen family.

This Schistosoma japonicum (Blood fluke) protein is Immunogenic miracidial antigen 8I' (8I').